Here is a 264-residue protein sequence, read N- to C-terminus: MRFKELVFLLKIDEEELLEKLYEEGFFNFAIEENKEGDRLLRVYLREGETLPSFLSNWKILDERLTTPKDWMVELEPFEIVEDVVVDPTEKVTRTDKIVVKLSPGVAFGTGLHPTTQMSVLFLKKYLKKGDRVVDVGCGTGILAIVAKKLGASYVLAVDVDEQAVEVAKENVQKNSVDVTVKRSDLLSEVEGVFDLVVSNILAEIHLRLLEDVSRVTHEKSILILSGIVDTKEDMVREKAQKKGWNLLERKQEREWVTLVMKRS.

The S-adenosyl-L-methionine site is built by T116, G137, D159, and N200.

The protein belongs to the methyltransferase superfamily. PrmA family.

The protein localises to the cytoplasm. It catalyses the reaction L-lysyl-[protein] + 3 S-adenosyl-L-methionine = N(6),N(6),N(6)-trimethyl-L-lysyl-[protein] + 3 S-adenosyl-L-homocysteine + 3 H(+). Methylates ribosomal protein L11. In Thermotoga neapolitana, this protein is Ribosomal protein L11 methyltransferase.